The following is a 1092-amino-acid chain: Isoleucine--tRNA ligase (1092 aa).

The 'HIGH' region signature appears at 53 to 63; it reads PFANGLPHYGH. The short motif at 613-617 is the 'KMSKS' region element; the sequence is KLSKR. K616 contributes to the ATP binding site.

It belongs to the class-I aminoacyl-tRNA synthetase family. IleS type 2 subfamily. As to quaternary structure, monomer. Zn(2+) serves as cofactor.

The protein localises to the cytoplasm. It catalyses the reaction tRNA(Ile) + L-isoleucine + ATP = L-isoleucyl-tRNA(Ile) + AMP + diphosphate. Its function is as follows. Catalyzes the attachment of isoleucine to tRNA(Ile). As IleRS can inadvertently accommodate and process structurally similar amino acids such as valine, to avoid such errors it has two additional distinct tRNA(Ile)-dependent editing activities. One activity is designated as 'pretransfer' editing and involves the hydrolysis of activated Val-AMP. The other activity is designated 'posttransfer' editing and involves deacylation of mischarged Val-tRNA(Ile). This is Isoleucine--tRNA ligase from Rickettsia africae (strain ESF-5).